Consider the following 629-residue polypeptide: tRNA uridine 5-carboxymethylaminomethyl modification enzyme MnmG (629 aa).

Residues 13-18 (GGGHAG), Val-125, and Ser-180 each bind FAD. 273–287 (GPRYCPSIEDKVMRF) is a binding site for NAD(+). FAD is bound at residue Gln-370.

This sequence belongs to the MnmG family. In terms of assembly, homodimer. Heterotetramer of two MnmE and two MnmG subunits. It depends on FAD as a cofactor.

Its subcellular location is the cytoplasm. Functionally, NAD-binding protein involved in the addition of a carboxymethylaminomethyl (cmnm) group at the wobble position (U34) of certain tRNAs, forming tRNA-cmnm(5)s(2)U34. This chain is tRNA uridine 5-carboxymethylaminomethyl modification enzyme MnmG, found in Escherichia coli O157:H7.